A 256-amino-acid chain; its full sequence is uncharacterized protein (256 aa).

Belongs to the glycosyltransferase 2 family.

This is an uncharacterized protein from Acanthamoeba polyphaga mimivirus (APMV).